The following is a 156-amino-acid chain: Small ribosomal subunit protein uS7 (156 aa).

Belongs to the universal ribosomal protein uS7 family. In terms of assembly, part of the 30S ribosomal subunit. Contacts proteins S9 and S11.

In terms of biological role, one of the primary rRNA binding proteins, it binds directly to 16S rRNA where it nucleates assembly of the head domain of the 30S subunit. Is located at the subunit interface close to the decoding center, probably blocks exit of the E-site tRNA. The polypeptide is Small ribosomal subunit protein uS7 (Bradyrhizobium sp. (strain BTAi1 / ATCC BAA-1182)).